A 354-amino-acid polypeptide reads, in one-letter code: Uroporphyrinogen decarboxylase (354 aa).

Substrate is bound by residues 27-31 (RQAGR), D77, Y154, S209, and H327.

The protein belongs to the uroporphyrinogen decarboxylase family. In terms of assembly, homodimer.

It localises to the cytoplasm. The catalysed reaction is uroporphyrinogen III + 4 H(+) = coproporphyrinogen III + 4 CO2. Its pathway is porphyrin-containing compound metabolism; protoporphyrin-IX biosynthesis; coproporphyrinogen-III from 5-aminolevulinate: step 4/4. Its function is as follows. Catalyzes the decarboxylation of four acetate groups of uroporphyrinogen-III to yield coproporphyrinogen-III. The sequence is that of Uroporphyrinogen decarboxylase from Shewanella baltica (strain OS185).